We begin with the raw amino-acid sequence, 236 residues long: ATP synthase subunit a (236 aa).

The next 5 helical transmembrane spans lie at 18–38, 79–99, 112–132, 174–194, and 205–227; these read STVMMLLVAAIIVFLIAFIST, GITLIMFIAVSNLLGLPFSIV, DPTVTMTLATMILVLSHFYGV, IYAGEILLGLLAGLASSGAVG, and WQGFSIFIGFIQAFIFTMLTMVY.

The protein belongs to the ATPase A chain family. F-type ATPases have 2 components, CF(1) - the catalytic core - and CF(0) - the membrane proton channel. CF(1) has five subunits: alpha(3), beta(3), gamma(1), delta(1), epsilon(1). CF(0) has three main subunits: a(1), b(2) and c(9-12). The alpha and beta chains form an alternating ring which encloses part of the gamma chain. CF(1) is attached to CF(0) by a central stalk formed by the gamma and epsilon chains, while a peripheral stalk is formed by the delta and b chains.

The protein resides in the cell membrane. Its function is as follows. Key component of the proton channel; it plays a direct role in the translocation of protons across the membrane. This Lysinibacillus sphaericus (strain C3-41) protein is ATP synthase subunit a.